Consider the following 430-residue polypeptide: Adenylosuccinate synthetase (430 aa).

Residues 13–19 (GDEGKGK) and 41–43 (GHT) each bind GTP. The Proton acceptor role is filled by Asp-14. Residues Asp-14 and Gly-41 each coordinate Mg(2+). Residues 14–17 (DEGK), 39–42 (NAGH), Thr-130, Arg-144, Gln-225, Thr-240, and Arg-304 each bind IMP. His-42 acts as the Proton donor in catalysis. Position 300–306 (300–306 (ATTGRAR)) interacts with substrate. GTP contacts are provided by residues Arg-306, 332–334 (KLD), and 414–416 (STG).

It belongs to the adenylosuccinate synthetase family. Homodimer. Mg(2+) is required as a cofactor.

Its subcellular location is the cytoplasm. It catalyses the reaction IMP + L-aspartate + GTP = N(6)-(1,2-dicarboxyethyl)-AMP + GDP + phosphate + 2 H(+). The protein operates within purine metabolism; AMP biosynthesis via de novo pathway; AMP from IMP: step 1/2. Plays an important role in the de novo pathway of purine nucleotide biosynthesis. Catalyzes the first committed step in the biosynthesis of AMP from IMP. The polypeptide is Adenylosuccinate synthetase (Pseudomonas syringae pv. syringae (strain B728a)).